We begin with the raw amino-acid sequence, 505 residues long: L-carnitine/gamma-butyrobetaine antiporter (505 aa).

12 helical membrane passes run 10-30 (IEPKVFFPLLIIVGILCWLTV), 51-71 (WGWAFEWYMVVMLFSWFWLVF), 92-112 (IFMMFASCTSAAVLFWGSIEI), 143-163 (GPLPWATYSFLSVAFAYFFFV), 195-215 (FYLVALIFAMGTSLGLATPLV), 231-251 (LDAIIITCWIILNAICVACGL), 263-283 (SYLSFLMLGWVFIVSGASFIM), 316-336 (WTVFYWAWWVIYAIQMSIFLA), 347-367 (LCFGMVMGLTASTWILWTVLG), 403-423 (LSTATMWGFFILCFIATVTLI), 446-466 (LLVRIGWSVLVGIIGIVLLAL), and 475-495 (AIIAGGCPLFFVNIMVTLSFI).

The protein belongs to the BCCT transporter (TC 2.A.15) family. CaiT subfamily. As to quaternary structure, homotrimer.

It localises to the cell inner membrane. The enzyme catalyses 4-(trimethylamino)butanoate(in) + (R)-carnitine(out) = 4-(trimethylamino)butanoate(out) + (R)-carnitine(in). Its pathway is amine and polyamine metabolism; carnitine metabolism. Catalyzes the exchange of L-carnitine for gamma-butyrobetaine. The chain is L-carnitine/gamma-butyrobetaine antiporter from Salmonella typhi.